We begin with the raw amino-acid sequence, 374 residues long: MEGNNNNEIIEKEEDLFQNIIKSTTDNKQRFNLFTKEIQKQYELTLSSNENSVKGLDWIINTLKQAYTHQNSKDDKKRLLQWILKNLIIQVKSLRLKYSLINNTTDNNNNNNNENNNDNNIDTVKEKRLINKLWEYQVQIIIRLEYLNLKEDLFPTTVSKGDDDDNNSGNQSSIDNLVSLLQDASFLMDSTSIISEGTTTTTNNNNNNNNNNNNNNNNGTNITTDSVRNKGCTDFLDKVILKRFLNLRKVLTKIYGSLEISKPLELKKDKNKFNNNNNKGNLKDLIVPTKENIESTLSINLDEVSDCNDINTNLKKKRKQQEQLQIEKEKKLLTIQQEQTKIPKDLFKKVNVKKLNHFTMSLSNPEKSFKTIKM.

The tract at residues 197 to 223 is disordered; it reads GTTTTTNNNNNNNNNNNNNNNNGTNIT. The segment covering 198–223 has biased composition (low complexity); the sequence is TTTTTNNNNNNNNNNNNNNNNGTNIT. The stretch at 302–342 forms a coiled coil; the sequence is DEVSDCNDINTNLKKKRKQQEQLQIEKEKKLLTIQQEQTKI.

This is an uncharacterized protein from Dictyostelium discoideum (Social amoeba).